A 146-amino-acid chain; its full sequence is Hemoglobin subunit beta (146 aa).

The residue at position 1 (Ala1) is an N-acetylalanine. A Globin domain is found at 2–146; it reads SFDPHEKQLI…VAAALAAEYH (145 aa). His63 and His92 together coordinate heme b.

Belongs to the globin family. Heterotetramer of two alpha chains and two beta chains. In terms of tissue distribution, red blood cells.

Involved in oxygen transport from the lung to the various peripheral tissues. The chain is Hemoglobin subunit beta (HBB) from Crocodylus niloticus (Nile crocodile).